We begin with the raw amino-acid sequence, 158 residues long: NADH-quinone oxidoreductase subunit B 2 (158 aa).

Positions 37, 38, 102, and 132 each coordinate [4Fe-4S] cluster.

It belongs to the complex I 20 kDa subunit family. NDH-1 is composed of 14 different subunits. Subunits NuoB, C, D, E, F, and G constitute the peripheral sector of the complex. [4Fe-4S] cluster serves as cofactor.

The protein resides in the cell inner membrane. It carries out the reaction a quinone + NADH + 5 H(+)(in) = a quinol + NAD(+) + 4 H(+)(out). Functionally, NDH-1 shuttles electrons from NADH, via FMN and iron-sulfur (Fe-S) centers, to quinones in the respiratory chain. Couples the redox reaction to proton translocation (for every two electrons transferred, four hydrogen ions are translocated across the cytoplasmic membrane), and thus conserves the redox energy in a proton gradient. This is NADH-quinone oxidoreductase subunit B 2 from Acidithiobacillus ferrooxidans (strain ATCC 53993 / BNL-5-31) (Leptospirillum ferrooxidans (ATCC 53993)).